The following is a 94-amino-acid chain: Phosphoribosyl-ATP pyrophosphatase (94 aa).

Belongs to the PRA-PH family.

The protein resides in the cytoplasm. The catalysed reaction is 1-(5-phospho-beta-D-ribosyl)-ATP + H2O = 1-(5-phospho-beta-D-ribosyl)-5'-AMP + diphosphate + H(+). The protein operates within amino-acid biosynthesis; L-histidine biosynthesis; L-histidine from 5-phospho-alpha-D-ribose 1-diphosphate: step 2/9. The sequence is that of Phosphoribosyl-ATP pyrophosphatase from Pyrobaculum neutrophilum (strain DSM 2338 / JCM 9278 / NBRC 100436 / V24Sta) (Thermoproteus neutrophilus).